A 301-amino-acid polypeptide reads, in one-letter code: Thymidylate synthase (301 aa).

DUMP contacts are provided by residues arginine 38 and 163-164 (RR). Catalysis depends on cysteine 183, which acts as the Nucleophile. Residues 203 to 206 (RSGD), asparagine 214, and 244 to 246 (HIY) each bind dUMP. Aspartate 206 contacts (6R)-5,10-methylene-5,6,7,8-tetrahydrofolate. A (6R)-5,10-methylene-5,6,7,8-tetrahydrofolate-binding site is contributed by alanine 300.

It belongs to the thymidylate synthase family. In terms of assembly, homodimer.

It catalyses the reaction dUMP + (6R)-5,10-methylene-5,6,7,8-tetrahydrofolate = 7,8-dihydrofolate + dTMP. The protein operates within pyrimidine metabolism; dTTP biosynthesis. Its function is as follows. Catalyzes the reductive methylation of deoxyuridylate to thymidylate. This Varicella-zoster virus (strain Dumas) (HHV-3) protein is Thymidylate synthase.